The chain runs to 1140 residues: Eukaryotic translation initiation factor 3 subunit A (1140 aa).

The region spanning 319-502 (LQRMAAHVLL…HCIYFGTDLT (184 aa)) is the PCI domain. Composition is skewed to basic and acidic residues over residues 590–624 (NNAR…EERE), 826–903 (RMAQ…RPEG), 925–965 (DRAD…KDNE), 1000–1019 (SRDD…DFRN), 1026–1053 (RGGD…EQQR), and 1061–1087 (DAPR…RDVR). Disordered regions lie at residues 590-632 (NNAR…QNEI) and 826-1140 (RMAQ…VKRR). A compositionally biased stretch (gly residues) spans 1091 to 1101 (PKEGGGGGGGN). Residues 1108 to 1130 (PRDEKPTTKQRDQPQDKENKAGD) show a composition bias toward basic and acidic residues.

Belongs to the eIF-3 subunit A family. As to quaternary structure, component of the eukaryotic translation initiation factor 3 (eIF-3) complex. The eIF-3 complex interacts with pix.

The protein localises to the cytoplasm. Functionally, RNA-binding component of the eukaryotic translation initiation factor 3 (eIF-3) complex, which is involved in protein synthesis of a specialized repertoire of mRNAs and, together with other initiation factors, stimulates binding of mRNA and methionyl-tRNAi to the 40S ribosome. The eIF-3 complex specifically targets and initiates translation of a subset of mRNAs involved in cell proliferation. The protein is Eukaryotic translation initiation factor 3 subunit A of Drosophila willistoni (Fruit fly).